Here is a 123-residue protein sequence, read N- to C-terminus: MNAVTESAATTAEMPVPFVFTDAAADKVKQLIDEEGNPDLKLRVFVQGGGCSGFQYGFTFDEEVNEDDTVMNKNGVQLLIDSMSYQYLVGAEIDYKDDLNGAQFVIKNPNATTTCGCGSSFSV.

The iron-sulfur cluster site is built by cysteine 51, cysteine 115, and cysteine 117.

It belongs to the HesB/IscA family. As to quaternary structure, homodimer. Requires iron-sulfur cluster as cofactor.

Functionally, required for insertion of 4Fe-4S clusters. This is Putative iron-sulfur cluster insertion protein ErpA from Burkholderia ambifaria (strain ATCC BAA-244 / DSM 16087 / CCUG 44356 / LMG 19182 / AMMD) (Burkholderia cepacia (strain AMMD)).